The sequence spans 402 residues: Phosphoglycerate kinase (402 aa).

Substrate contacts are provided by residues 24-26 (DFN), Arg-40, 63-66 (HFGR), Arg-122, and Arg-155. ATP is bound by residues Lys-206, Gly-297, Glu-328, and 357–360 (GGDS).

This sequence belongs to the phosphoglycerate kinase family. Monomer.

It is found in the cytoplasm. The catalysed reaction is (2R)-3-phosphoglycerate + ATP = (2R)-3-phospho-glyceroyl phosphate + ADP. Its pathway is carbohydrate degradation; glycolysis; pyruvate from D-glyceraldehyde 3-phosphate: step 2/5. The chain is Phosphoglycerate kinase from Synechococcus sp. (strain WH7803).